A 381-amino-acid chain; its full sequence is Guanine nucleotide-binding protein G(s) subunit alpha (381 aa).

Cysteine 3 carries S-palmitoyl cysteine lipidation. The region spanning 36-381 (ALHRLLLLGA…RMHLQKYELL (346 aa)) is the G-alpha domain. Residues 39 to 52 (RLLLLGAGESGKST) are G1 motif. GTP contacts are provided by residues 44-51 (GAGESGKS), 183-189 (LRCRVLT), 208-212 (GVGGQ), 277-280 (NKQD), and alanine 353. Positions 51 and 189 each coordinate Mg(2+). The segment at 181-189 (DILRCRVLT) is G2 motif. A G3 motif region spans residues 204-213 (FYMFGVGGQR). The interval 273 to 280 (ILFLNKQD) is G4 motif. Positions 351–356 (TTAVDT) are G5 motif.

This sequence belongs to the G-alpha family. G(s) subfamily. In terms of assembly, g proteins are composed of 3 units; alpha, beta and gamma. The alpha chain contains the guanine nucleotide binding site.

Guanine nucleotide-binding proteins (G proteins) are involved as modulators or transducers in various transmembrane signaling systems. The G(s) protein is involved in hormonal regulation of adenylate cyclase: it activates the cyclase in response to beta-adrenergic stimuli. This chain is Guanine nucleotide-binding protein G(s) subunit alpha, found in Geodia cydonium (Sponge).